A 186-amino-acid chain; its full sequence is Large ribosomal subunit protein uL10 (186 aa).

Belongs to the universal ribosomal protein uL10 family. In terms of assembly, part of the ribosomal stalk of the 50S ribosomal subunit. The N-terminus interacts with L11 and the large rRNA to form the base of the stalk. The C-terminus forms an elongated spine to which L12 dimers bind in a sequential fashion forming a multimeric L10(L12)X complex.

Forms part of the ribosomal stalk, playing a central role in the interaction of the ribosome with GTP-bound translation factors. In Roseiflexus sp. (strain RS-1), this protein is Large ribosomal subunit protein uL10.